Consider the following 392-residue polypeptide: GTPase Obg (392 aa).

The Obg domain occupies 1-159; it reads MKFVDEATIL…RDLQLELMLL (159 aa). Residues 127-146 form a disordered region; that stretch reads NTRFKSSVNRTPRQKTMGTP. The segment covering 129–143 has biased composition (polar residues); that stretch reads RFKSSVNRTPRQKTM. Residues 160-333 form the OBG-type G domain; the sequence is ADVGMLGLPN…LCWDVMAFIK (174 aa). Residues 166 to 173, 191 to 195, 213 to 216, 283 to 286, and 314 to 316 contribute to the GTP site; these read GLPNAGKS, FTTLV, DIPG, NKVD, and SAA. Ser-173 and Thr-193 together coordinate Mg(2+). The segment at 360 to 392 is disordered; that stretch reads QLEEAQPEVEEDDDWDDDWDEDDEEGVETIYQR. A compositionally biased stretch (acidic residues) spans 364–386; that stretch reads AQPEVEEDDDWDDDWDEDDEEGV.

Belongs to the TRAFAC class OBG-HflX-like GTPase superfamily. OBG GTPase family. As to quaternary structure, monomer. Requires Mg(2+) as cofactor.

It localises to the cytoplasm. Functionally, an essential GTPase which binds GTP, GDP and possibly (p)ppGpp with moderate affinity, with high nucleotide exchange rates and a fairly low GTP hydrolysis rate. Plays a role in control of the cell cycle, stress response, ribosome biogenesis and in those bacteria that undergo differentiation, in morphogenesis control. The sequence is that of GTPase Obg from Erwinia tasmaniensis (strain DSM 17950 / CFBP 7177 / CIP 109463 / NCPPB 4357 / Et1/99).